The chain runs to 1032 residues: tRNA wybutosine-synthesizing protein 4 (1032 aa).

S-adenosyl-L-methionine-binding positions include Arg69, Gly95, Asp122, 169–170 (DL), and Glu196. The interval 702–726 (ESVEPNKSQSEKATSKPSAQSQNEP) is disordered. Residues 716–725 (SKPSAQSQNE) are compositionally biased toward polar residues. In terms of domain architecture, JmjC spans 833–988 (PTKLPANLAV…AAGRDVYGNR (156 aa)).

The protein belongs to the methyltransferase superfamily. LCMT family.

The catalysed reaction is 7-[(3S)-3-amino-3-carboxypropyl]wyosine(37) in tRNA(Phe) + S-adenosyl-L-methionine = 7-[(3S)-(3-amino-3-methoxycarbonyl)propyl]wyosine(37) in tRNA(Phe) + S-adenosyl-L-homocysteine. It carries out the reaction 7-[(3S)-(3-amino-3-methoxycarbonyl)propyl]wyosine(37) in tRNA(Phe) + S-adenosyl-L-methionine + CO2 = wybutosine(37) in tRNA(Phe) + S-adenosyl-L-homocysteine + 2 H(+). The protein operates within tRNA modification; wybutosine-tRNA(Phe) biosynthesis. Functionally, probable S-adenosyl-L-methionine-dependent methyltransferase that acts as a component of the wybutosine biosynthesis pathway. Wybutosine is a hyper modified guanosine with a tricyclic base found at the 3'-position adjacent to the anticodon of eukaryotic phenylalanine tRNA. May methylate the carboxyl group of leucine residues to form alpha-leucine ester residues. The polypeptide is tRNA wybutosine-synthesizing protein 4 (ppm2) (Aspergillus oryzae (strain ATCC 42149 / RIB 40) (Yellow koji mold)).